Consider the following 539-residue polypeptide: NADH-quinone oxidoreductase subunit N 2 (539 aa).

13 consecutive transmembrane segments (helical) span residues Leu11–Thr31, Leu52–Met72, Pro106–Thr126, Leu141–Ile161, Tyr193–Leu213, Gly248–Val268, Ala296–Gly316, Trp329–Leu349, Met357–Gln377, Leu385–Val405, Leu429–Val449, Ala462–Leu484, and Val500–Ile520.

This sequence belongs to the complex I subunit 2 family. NDH-1 is composed of 14 different subunits. Subunits NuoA, H, J, K, L, M, N constitute the membrane sector of the complex.

The protein resides in the cell membrane. The catalysed reaction is a quinone + NADH + 5 H(+)(in) = a quinol + NAD(+) + 4 H(+)(out). Its function is as follows. NDH-1 shuttles electrons from NADH, via FMN and iron-sulfur (Fe-S) centers, to quinones in the respiratory chain. The immediate electron acceptor for the enzyme in this species is believed to be ubiquinone. Couples the redox reaction to proton translocation (for every two electrons transferred, four hydrogen ions are translocated across the cytoplasmic membrane), and thus conserves the redox energy in a proton gradient. In Herpetosiphon aurantiacus (strain ATCC 23779 / DSM 785 / 114-95), this protein is NADH-quinone oxidoreductase subunit N 2.